The chain runs to 425 residues: MEYEAVADLAPDRRVALFERDAGVDAVRSDVAEILDRVESEGDVALRALASEFDDVEVGNLDVTDEMERAADAVPDDVYDAIEDAAANIRAFHEAQLPDDWRESFAAGRELGRRFRPVRRVGVYAPGGTAAYPSSVLMGVIPAVVAGVEQVAVATPPAETINPVTLAAAHAAGADRVYQVGGAQAIGAFAYGTETVDTVQTVVGPGNKWVTAAKAEVRGDVEIDFLAGPSELLVVADETAEPAFVAADLLAQAEHDPNASVVAVTDDEATAAAITDAVAARLDDRERADTIRAALDNEASGVFVARSMSEAVMFAEEYAAEHLSIQASDDEALLDRIDSAGSVFLGGYAPVAAGDYAAGTNHVLPTNGTARVTGGLSVDTFLRSTTVQRLDREGLAALRETVTTLADAEGLEGHAASVDARFEDE.

NAD(+)-binding residues include Tyr-124, Gln-184, and Asn-207. Substrate is bound by residues Ser-230, Gln-252, and His-255. Zn(2+)-binding residues include Gln-252 and His-255. Active-site proton acceptor residues include Glu-321 and His-322. Residues His-322, Asp-355, Glu-409, and His-414 each coordinate substrate. Asp-355 serves as a coordination point for Zn(2+). His-414 is a Zn(2+) binding site.

The protein belongs to the histidinol dehydrogenase family. Zn(2+) is required as a cofactor.

It catalyses the reaction L-histidinol + 2 NAD(+) + H2O = L-histidine + 2 NADH + 3 H(+). The protein operates within amino-acid biosynthesis; L-histidine biosynthesis; L-histidine from 5-phospho-alpha-D-ribose 1-diphosphate: step 9/9. Catalyzes the sequential NAD-dependent oxidations of L-histidinol to L-histidinaldehyde and then to L-histidine. In Halobacterium salinarum (strain ATCC 700922 / JCM 11081 / NRC-1) (Halobacterium halobium), this protein is Histidinol dehydrogenase.